Reading from the N-terminus, the 245-residue chain is MHNYKLTIQYDGARFKGWQRLGNNDNTIQGKIESVISEMVGKETEIIGCSRTDAGVHALNQVANFQSDEKLVEHKVKKYLNQYLPNDISITNVEEVHDRFHARYNSKAKTYLYKIWNEEHTNPFMRKYSMHVNKKLNVKSMKEAAKHLVGSHDFTAFSNAKSKKKSMVREVYTLEVMEEAGFVQIRVSGNGFLHNMVRKIVGALIEVGLGQLDAEAIPQILEAKQRNQINCLAEASGLYLENVEF.

Aspartate 53 (nucleophile) is an active-site residue. Tyrosine 111 is a binding site for substrate.

The protein belongs to the tRNA pseudouridine synthase TruA family. Homodimer.

The catalysed reaction is uridine(38/39/40) in tRNA = pseudouridine(38/39/40) in tRNA. Its function is as follows. Formation of pseudouridine at positions 38, 39 and 40 in the anticodon stem and loop of transfer RNAs. In Bacillus cereus (strain ATCC 10987 / NRS 248), this protein is tRNA pseudouridine synthase A 2.